The primary structure comprises 312 residues: Aspartate carbamoyltransferase catalytic subunit (312 aa).

Carbamoyl phosphate is bound by residues Arg-58 and Thr-59. Lys-86 serves as a coordination point for L-aspartate. Carbamoyl phosphate-binding residues include Arg-108, His-136, and Gln-139. Arg-169 and Arg-223 together coordinate L-aspartate. Carbamoyl phosphate contacts are provided by Gly-264 and Pro-265.

This sequence belongs to the aspartate/ornithine carbamoyltransferase superfamily. ATCase family. Heterododecamer (2C3:3R2) of six catalytic PyrB chains organized as two trimers (C3), and six regulatory PyrI chains organized as three dimers (R2).

It catalyses the reaction carbamoyl phosphate + L-aspartate = N-carbamoyl-L-aspartate + phosphate + H(+). The protein operates within pyrimidine metabolism; UMP biosynthesis via de novo pathway; (S)-dihydroorotate from bicarbonate: step 2/3. In terms of biological role, catalyzes the condensation of carbamoyl phosphate and aspartate to form carbamoyl aspartate and inorganic phosphate, the committed step in the de novo pyrimidine nucleotide biosynthesis pathway. The chain is Aspartate carbamoyltransferase catalytic subunit from Desulforapulum autotrophicum (strain ATCC 43914 / DSM 3382 / VKM B-1955 / HRM2) (Desulfobacterium autotrophicum).